Reading from the N-terminus, the 1118-residue chain is Error-prone DNA polymerase (1118 aa).

Residues 1071 to 1118 (GPQPMGYAKEVGSDRRSRPEIGNAPARQDLATLSEEAEQVMPKGRNFQ) are disordered.

This sequence belongs to the DNA polymerase type-C family. DnaE2 subfamily.

The protein localises to the cytoplasm. It carries out the reaction DNA(n) + a 2'-deoxyribonucleoside 5'-triphosphate = DNA(n+1) + diphosphate. Its function is as follows. DNA polymerase involved in damage-induced mutagenesis and translesion synthesis (TLS). It is not the major replicative DNA polymerase. In Mesorhizobium japonicum (strain LMG 29417 / CECT 9101 / MAFF 303099) (Mesorhizobium loti (strain MAFF 303099)), this protein is Error-prone DNA polymerase.